Reading from the N-terminus, the 222-residue chain is Glutathione S-transferase A4 (222 aa).

Position 1 is an N-acetylmethionine (methionine 1). The GST N-terminal domain occupies 3–83; it reads TKPKLHYPNG…YIADKHHLFG (81 aa). Residues tyrosine 9, 54–55, and 67–68 contribute to the glutathione site; these read QV and QT. Residues 85 to 208 enclose the GST C-terminal domain; that stretch reads DLKERTLIDM…EPGSKKKPPP (124 aa).

Belongs to the GST superfamily. Alpha family. As to quaternary structure, homodimer.

It localises to the cytoplasm. The catalysed reaction is RX + glutathione = an S-substituted glutathione + a halide anion + H(+). Its function is as follows. Conjugation of reduced glutathione to a wide number of exogenous and endogenous hydrophobic electrophiles. This is Glutathione S-transferase A4 (GSTA4) from Bos taurus (Bovine).